The primary structure comprises 424 residues: MSVTVIVGAQCGDEGKGKMVDLIAQDYDLVIRFQGGDNAGHTVVNQYGTFKMHLIPCGIFNQNAISLVGTGMVVNPDELQKEMKQITSAGMSVDNLKISTRANILMPYHRDLDELNEQSGGMSIGTTKRGIGPAYAGRATRTNIRFGDLAHQDYLKSHFEKVLPAINHQLSFFGAAQYTVDQLCEYCSNWYKLYNEHIVDAFTLIHNMMKENKRILFEGQLGVMKDIDLGIYPFVTSSNPIAAYAAVSSGIPARSITSVIGVAKAFSSQVGDGPFPTEVLDNCIVSLRGTGKNIDDEFGARTGRPRRLGWLDIPVLRYAHTINGFDTLAICKLDKMDSLPEIKICTSYRYQDQILSVFPDTEILGQVKAEYETLPGWECTTRGVNSFDDLPENAKSYIKRIEELVGVPVKYIGVGPARSDVIIR.

Residues 12 to 18 (GDEGKGK) and 40 to 42 (GHT) contribute to the GTP site. The active-site Proton acceptor is the aspartate 13. Residues aspartate 13 and glycine 40 each contribute to the Mg(2+) site. IMP is bound by residues 13 to 16 (DEGK), 38 to 41 (NAGH), threonine 127, arginine 141, threonine 236, and arginine 304. The Proton donor role is filled by histidine 41. 300 to 306 (ARTGRPR) contributes to the substrate binding site. GTP is bound by residues arginine 306, 332–334 (KLD), and 413–415 (GVG).

It belongs to the adenylosuccinate synthetase family. Homodimer. Mg(2+) is required as a cofactor.

The protein localises to the cytoplasm. The catalysed reaction is IMP + L-aspartate + GTP = N(6)-(1,2-dicarboxyethyl)-AMP + GDP + phosphate + 2 H(+). The protein operates within purine metabolism; AMP biosynthesis via de novo pathway; AMP from IMP: step 1/2. Its function is as follows. Plays an important role in the de novo pathway of purine nucleotide biosynthesis. Catalyzes the first committed step in the biosynthesis of AMP from IMP. The polypeptide is Adenylosuccinate synthetase 1 (Methanosarcina acetivorans (strain ATCC 35395 / DSM 2834 / JCM 12185 / C2A)).